We begin with the raw amino-acid sequence, 359 residues long: ATP-dependent (S)-NAD(P)H-hydrate dehydratase (359 aa).

One can recognise a YjeF C-terminal domain in the interval 61–350 (LLEEARKVVP…SEINSVFVNN (290 aa)). (6S)-NADPHX is bound by residues Gly-161 and 214-220 (NVVEFQR). Residues 256–260 (KGEVD) and 275–284 (GSPRRCGGQG) contribute to the ATP site. Asp-285 lines the (6S)-NADPHX pocket.

This sequence belongs to the NnrD/CARKD family. Mg(2+) is required as a cofactor.

It catalyses the reaction (6S)-NADHX + ATP = ADP + phosphate + NADH + H(+). It carries out the reaction (6S)-NADPHX + ATP = ADP + phosphate + NADPH + H(+). Its function is as follows. Catalyzes the dehydration of the S-form of NAD(P)HX at the expense of ATP, which is converted to ADP. Together with NAD(P)HX epimerase, which catalyzes the epimerization of the S- and R-forms, the enzyme allows the repair of both epimers of NAD(P)HX, a damaged form of NAD(P)H that is a result of enzymatic or heat-dependent hydration. This chain is ATP-dependent (S)-NAD(P)H-hydrate dehydratase, found in Ciona intestinalis (Transparent sea squirt).